The primary structure comprises 469 residues: MSTATLYDKVWALHQVAELPSGSTQLFIGLHLIHEVTSPQAFAALKDLGLSVRHPERTVATVDHIVPTTSQARPFADGLAEEMLSTLERNCHENGIHLNGLGSGRQGIVHVMAPELGLTQPGMTVACGDSHTSTHGAFGAIAFGIGTSQVRDVLASQSLTMNKLKVRRIWVDGALQPGVFAKDLVLHIIRTLGVKGGVGYAYEFAGPAIEALSMEERMTLCNMAIEGGARCGYVNPDQTTFDYLKGRPHAPSGDAWDHAVSWWKSLASGADACFDDEVKFDAAVIAPTITWGITPGQGIGVDEAVPTLEQTPEEDRPLAQEAYRYMDLQPGQAIAGLPVDVCFIGSCTNGRLSDLRAAAAVAAGRQVASGIKAFVVPGSEQVAAAAEAEGLDAVFRQAGFEWREPGCSMCLAMNPDRLEGRQISASSSNRNFKGRQGSASGRTLLMSPAMVAAAAIAGRVTDVRSLPPA.

Positions 347, 407, and 410 each coordinate [4Fe-4S] cluster.

This sequence belongs to the aconitase/IPM isomerase family. LeuC type 1 subfamily. As to quaternary structure, heterodimer of LeuC and LeuD. Requires [4Fe-4S] cluster as cofactor.

It catalyses the reaction (2R,3S)-3-isopropylmalate = (2S)-2-isopropylmalate. Its pathway is amino-acid biosynthesis; L-leucine biosynthesis; L-leucine from 3-methyl-2-oxobutanoate: step 2/4. In terms of biological role, catalyzes the isomerization between 2-isopropylmalate and 3-isopropylmalate, via the formation of 2-isopropylmaleate. This chain is 3-isopropylmalate dehydratase large subunit, found in Synechococcus sp. (strain RCC307).